A 424-amino-acid polypeptide reads, in one-letter code: Histidine--tRNA ligase (424 aa).

This sequence belongs to the class-II aminoacyl-tRNA synthetase family. As to quaternary structure, homodimer.

Its subcellular location is the cytoplasm. It catalyses the reaction tRNA(His) + L-histidine + ATP = L-histidyl-tRNA(His) + AMP + diphosphate + H(+). The sequence is that of Histidine--tRNA ligase from Desulfitobacterium hafniense (strain DSM 10664 / DCB-2).